The following is a 226-amino-acid chain: Orotate phosphoribosyltransferase 1 (226 aa).

5-phospho-alpha-D-ribose 1-diphosphate is bound at residue lysine 30. Residue 38-39 (FF) coordinates orotate. 5-phospho-alpha-D-ribose 1-diphosphate-binding positions include 76–77 (YK), arginine 106, lysine 107, lysine 110, histidine 112, and 132–140 (DDVMTAGTA). Residues threonine 136 and arginine 164 each contribute to the orotate site. Serine 213 and serine 225 each carry phosphoserine.

The protein belongs to the purine/pyrimidine phosphoribosyltransferase family. PyrE subfamily. Homodimer.

It carries out the reaction orotidine 5'-phosphate + diphosphate = orotate + 5-phospho-alpha-D-ribose 1-diphosphate. It functions in the pathway pyrimidine metabolism; UMP biosynthesis via de novo pathway; UMP from orotate: step 1/2. In terms of biological role, catalyzes the transfer of a ribosyl phosphate group from 5-phosphoribose 1-diphosphate to orotate, leading to the formation of orotidine monophosphate (OMP). This is Orotate phosphoribosyltransferase 1 (URA5) from Saccharomyces cerevisiae (strain ATCC 204508 / S288c) (Baker's yeast).